Consider the following 494-residue polypeptide: Guanosine-5'-triphosphate,3'-diphosphate pyrophosphatase (494 aa).

It belongs to the GppA/Ppx family. GppA subfamily.

It carries out the reaction guanosine 3'-diphosphate 5'-triphosphate + H2O = guanosine 3',5'-bis(diphosphate) + phosphate + H(+). It functions in the pathway purine metabolism; ppGpp biosynthesis; ppGpp from GTP: step 2/2. Functionally, catalyzes the conversion of pppGpp to ppGpp. Guanosine pentaphosphate (pppGpp) is a cytoplasmic signaling molecule which together with ppGpp controls the 'stringent response', an adaptive process that allows bacteria to respond to amino acid starvation, resulting in the coordinated regulation of numerous cellular activities. The polypeptide is Guanosine-5'-triphosphate,3'-diphosphate pyrophosphatase (Shigella flexneri serotype 5b (strain 8401)).